A 316-amino-acid chain; its full sequence is ATP synthase gamma chain (316 aa).

It belongs to the ATPase gamma chain family. As to quaternary structure, F-type ATPases have 2 components, CF(1) - the catalytic core - and CF(0) - the membrane proton channel. CF(1) has five subunits: alpha(3), beta(3), gamma(1), delta(1), epsilon(1). CF(0) has three main subunits: a, b and c.

The protein localises to the cellular thylakoid membrane. Functionally, produces ATP from ADP in the presence of a proton gradient across the membrane. The gamma chain is believed to be important in regulating ATPase activity and the flow of protons through the CF(0) complex. The chain is ATP synthase gamma chain from Prochlorococcus marinus (strain MIT 9211).